A 477-amino-acid chain; its full sequence is Protoporphyrinogen oxidase (477 aa).

FAD contacts are provided by residues 9 to 14 (GGGISG), Trp-42, 57 to 60 (GPRG), Val-257, Ala-449, and 454 to 456 (VAV).

Belongs to the protoporphyrinogen/coproporphyrinogen oxidase family. Protoporphyrinogen oxidase subfamily. In terms of assembly, monomer. Homodimer. FAD serves as cofactor. As to expression, detected in liver (at protein level).

Its subcellular location is the mitochondrion inner membrane. It catalyses the reaction protoporphyrinogen IX + 3 O2 = protoporphyrin IX + 3 H2O2. It functions in the pathway porphyrin-containing compound metabolism; protoporphyrin-IX biosynthesis; protoporphyrin-IX from protoporphyrinogen-IX: step 1/1. In terms of biological role, catalyzes the 6-electron oxidation of protoporphyrinogen-IX to form protoporphyrin-IX. In Bos taurus (Bovine), this protein is Protoporphyrinogen oxidase (PPOX).